An 893-amino-acid polypeptide reads, in one-letter code: Phosphatidate phosphatase LPIN2 (893 aa).

The N-LIP stretch occupies residues 1 to 108; sequence MNYVGQLAGQ…LPAYLATSPI (108 aa). Ser-106 bears the Phosphoserine mark. Residues 122–216 are disordered; the sequence is LVKSSGNERP…EDYKEPSLFH (95 aa). Residues 123 to 151 are compositionally biased toward polar residues; the sequence is VKSSGNERPAQSSDVSHTLESEAVFTQSS. Over residues 152–162 the composition is skewed to basic residues; sequence VKKKKRRRKKC. Positions 153 to 158 match the Nuclear localization signal motif; that stretch reads KKKKRR. A phosphoserine mark is found at Ser-174, Ser-186, and Ser-187. Basic and acidic residues predominate over residues 204 to 213; sequence LKEEDYKEPS. Phosphoserine occurs at positions 243 and 303. Disordered stretches follow at residues 357–400 and 417–456; these read LLDA…PDDI and FPKSDTDPGSRQWPESDTFSGSQSPQSVGSAAADSGTECL. Over residues 360-371 the composition is skewed to low complexity; it reads ADPVPSPSAEAP. A compositionally biased stretch (basic residues) spans 384 to 393; the sequence is KKKGVHKRSQ. The span at 423–445 shows a compositional bias: polar residues; that stretch reads DPGSRQWPESDTFSGSQSPQSVG. Position 563 is a phosphoserine (Ser-563). A disordered region spans residues 568-611; it reads LPETKEGKSEVPPANDLPSNAEEPTSARPAENDTSSDEGSQELE. Acidic residues predominate over residues 601–611; it reads TSSDEGSQELE. Residues 632–834 form a C-LIP region; the sequence is YKKSLRLSSD…RIFTVNPKGE (203 aa). The short motif at 686-690 is the DXDXT motif element; the sequence is DIDGT. The LXXIL motif signature appears at 697-701; it reads LGQIL.

This sequence belongs to the lipin family. Mg(2+) is required as a cofactor. Expressed at high level in liver and to some extend in lung, kidney, placenta, spleen, thymus, lymph node, prostate, testes, small intestine, and colon. Expressed also in circulating red blood cells and site of lymphopoiesis.

Its subcellular location is the nucleus. The protein localises to the cytoplasm. It localises to the cytosol. The protein resides in the endoplasmic reticulum membrane. The catalysed reaction is a 1,2-diacyl-sn-glycero-3-phosphate + H2O = a 1,2-diacyl-sn-glycerol + phosphate. Inhibited by N-ethylmaleimide. Functionally, acts as a magnesium-dependent phosphatidate phosphatase enzyme which catalyzes the conversion of phosphatidic acid to diacylglycerol during triglyceride, phosphatidylcholine and phosphatidylethanolamine biosynthesis in the endoplasmic reticulum membrane. Plays important roles in controlling the metabolism of fatty acids at different levels. Also acts as a nuclear transcriptional coactivator for PPARGC1A to modulate lipid metabolism. In Mus musculus (Mouse), this protein is Phosphatidate phosphatase LPIN2.